Reading from the N-terminus, the 373-residue chain is Chaperone protein DnaJ (373 aa).

In terms of domain architecture, J spans 5 to 70; that stretch reads DYYEVLGVHR…QQRVIYDQYG (66 aa). The CR-type zinc-finger motif lies at 136–214; that stretch reads GLETKIQIPR…CHGSGRVRGK (79 aa). Cysteine 149, cysteine 152, cysteine 166, cysteine 169, cysteine 188, cysteine 191, cysteine 202, and cysteine 205 together coordinate Zn(2+). 4 CXXCXGXG motif repeats span residues 149-156, 166-173, 188-195, and 202-209; these read CGTCDGIG, CPTCQGAG, CPECNGEG, and CEECHGSG.

The protein belongs to the DnaJ family. In terms of assembly, homodimer. Zn(2+) is required as a cofactor.

Its subcellular location is the cytoplasm. Its function is as follows. Participates actively in the response to hyperosmotic and heat shock by preventing the aggregation of stress-denatured proteins and by disaggregating proteins, also in an autonomous, DnaK-independent fashion. Unfolded proteins bind initially to DnaJ; upon interaction with the DnaJ-bound protein, DnaK hydrolyzes its bound ATP, resulting in the formation of a stable complex. GrpE releases ADP from DnaK; ATP binding to DnaK triggers the release of the substrate protein, thus completing the reaction cycle. Several rounds of ATP-dependent interactions between DnaJ, DnaK and GrpE are required for fully efficient folding. Also involved, together with DnaK and GrpE, in the DNA replication of plasmids through activation of initiation proteins. This Syntrophotalea carbinolica (strain DSM 2380 / NBRC 103641 / GraBd1) (Pelobacter carbinolicus) protein is Chaperone protein DnaJ.